Consider the following 130-residue polypeptide: Iron-sulfur cluster insertion protein ErpA (130 aa).

Positions 46, 116, and 118 each coordinate iron-sulfur cluster.

The protein belongs to the HesB/IscA family. As to quaternary structure, homodimer. Iron-sulfur cluster is required as a cofactor.

Its function is as follows. Required for insertion of 4Fe-4S clusters for at least IspG. This Legionella pneumophila (strain Lens) protein is Iron-sulfur cluster insertion protein ErpA.